The sequence spans 424 residues: Histidine--tRNA ligase (424 aa).

Belongs to the class-II aminoacyl-tRNA synthetase family. In terms of assembly, homodimer.

The protein resides in the cytoplasm. It carries out the reaction tRNA(His) + L-histidine + ATP = L-histidyl-tRNA(His) + AMP + diphosphate + H(+). In Escherichia coli (strain SE11), this protein is Histidine--tRNA ligase.